Consider the following 296-residue polypeptide: ATP synthase gamma chain (296 aa).

Belongs to the ATPase gamma chain family. F-type ATPases have 2 components, CF(1) - the catalytic core - and CF(0) - the membrane proton channel. CF(1) has five subunits: alpha(3), beta(3), gamma(1), delta(1), epsilon(1). CF(0) has three main subunits: a, b and c.

Its subcellular location is the cell membrane. Produces ATP from ADP in the presence of a proton gradient across the membrane. The gamma chain is believed to be important in regulating ATPase activity and the flow of protons through the CF(0) complex. In Pseudarthrobacter chlorophenolicus (strain ATCC 700700 / DSM 12829 / CIP 107037 / JCM 12360 / KCTC 9906 / NCIMB 13794 / A6) (Arthrobacter chlorophenolicus), this protein is ATP synthase gamma chain.